A 368-amino-acid chain; its full sequence is RNA polymerase sigma factor SigA (368 aa).

Positions 71 to 83 (NEKDSSDTDDKIN) are enriched in basic and acidic residues. Positions 71–90 (NEKDSSDTDDKINPNDLSAP) are disordered. Positions 135 to 205 (LAEANLRLVV…TRAIADQART (71 aa)) are sigma-70 factor domain-2. An Interaction with polymerase core subunit RpoC motif is present at residues 159–162 (DLIQ). The tract at residues 214 to 290 (ETINKLIRVQ…DQEAQSPSDH (77 aa)) is sigma-70 factor domain-3. Residues 303-356 (VLDTLTDREENVLRLRFGLDDGRTRTLEEVGKVFGVTRERIRQIEAKALRKLRH) are sigma-70 factor domain-4. Residues 329 to 348 (LEEVGKVFGVTRERIRQIEA) constitute a DNA-binding region (H-T-H motif).

This sequence belongs to the sigma-70 factor family. RpoD/SigA subfamily. Interacts transiently with the RNA polymerase catalytic core.

The protein localises to the cytoplasm. Its function is as follows. Sigma factors are initiation factors that promote the attachment of RNA polymerase to specific initiation sites and are then released. This sigma factor is the primary sigma factor during exponential growth. The polypeptide is RNA polymerase sigma factor SigA (Staphylococcus epidermidis (strain ATCC 35984 / DSM 28319 / BCRC 17069 / CCUG 31568 / BM 3577 / RP62A)).